The sequence spans 657 residues: Glycogen debranching enzyme (657 aa).

The active-site Nucleophile is D336. E371 functions as the Proton donor in the catalytic mechanism. Positions 460–479 are disordered; that stretch reads ANGEENRDGTNNNYSNNHGK.

It belongs to the glycosyl hydrolase 13 family.

It carries out the reaction Hydrolysis of (1-&gt;6)-alpha-D-glucosidic linkages to branches with degrees of polymerization of three or four glucose residues in limit dextrin.. Its pathway is glycan degradation; glycogen degradation. In terms of biological role, removes maltotriose and maltotetraose chains that are attached by 1,6-alpha-linkage to the limit dextrin main chain, generating a debranched limit dextrin. This is Glycogen debranching enzyme from Shigella dysenteriae serotype 1 (strain Sd197).